The sequence spans 704 residues: Structure-specific endonuclease subunit SLX1 homolog (704 aa).

Residues 4-90 (RFHCVYLLTS…TASARLRHTI (87 aa)) form the GIY-YIG domain. 3 disordered regions span residues 157–180 (ESPR…ADGV), 290–323 (ASFA…RVRT), and 354–378 (GAAL…SRPP). Polar residues-rich tracts occupy residues 161 to 175 (VGTQ…SLQG) and 311 to 320 (AGSSTPSPQR). The SLX1-type zinc-finger motif lies at 446–526 (CSLCALPLQP…PSQPCPCPLC (81 aa)). 2 disordered regions span residues 601 to 629 (VPGA…SSPI) and 650 to 671 (ASLA…GHSN). Low complexity predominate over residues 650 to 662 (ASLAALSPTSASP).

It belongs to the SLX1 family. In terms of assembly, forms a heterodimer with a member of the SLX4 family. The cofactor is a divalent metal cation.

Its subcellular location is the nucleus. Catalytic subunit of a heterodimeric structure-specific endonuclease that resolves DNA secondary structures generated during DNA repair and recombination. Has endonuclease activity towards branched DNA substrates, introducing single-strand cuts in duplex DNA close to junctions with ss-DNA. The protein is Structure-specific endonuclease subunit SLX1 homolog of Leishmania major.